Reading from the N-terminus, the 201-residue chain is Large ribosomal subunit protein mL61 (201 aa).

Residues 87–118 (RDDKDAKPSSTPFPTSSADGSSPAPKPAQGER) form a disordered region. A compositionally biased stretch (polar residues) spans 94–106 (PSSTPFPTSSADG).

Belongs to the mitochondrion-specific ribosomal protein mL61 family. As to quaternary structure, component of the mitochondrial large ribosomal subunit (mt-LSU). Mature N.crassa 74S mitochondrial ribosomes consist of a small (37S) and a large (54S) subunit. The 37S small subunit contains a 16S ribosomal RNA (16S mt-rRNA) and 32 different proteins. The 54S large subunit contains a 23S rRNA (23S mt-rRNA) and 42 different proteins.

The protein localises to the mitochondrion. Its function is as follows. Component of the mitochondrial ribosome (mitoribosome), a dedicated translation machinery responsible for the synthesis of mitochondrial genome-encoded proteins, including at least some of the essential transmembrane subunits of the mitochondrial respiratory chain. The mitoribosomes are attached to the mitochondrial inner membrane and translation products are cotranslationally integrated into the membrane. The sequence is that of Large ribosomal subunit protein mL61 (mrp49) from Neurospora crassa (strain ATCC 24698 / 74-OR23-1A / CBS 708.71 / DSM 1257 / FGSC 987).